We begin with the raw amino-acid sequence, 48 residues long: Toxin CSTX-14 (48 aa).

4 disulfide bridges follow: cysteine 3/cysteine 18, cysteine 10/cysteine 27, cysteine 17/cysteine 42, and cysteine 29/cysteine 40.

This sequence belongs to the neurotoxin 19 (CSTX) family. 12 subfamily. As to quaternary structure, heterodimer of A and B chains; disulfide-linked. Contains 4 disulfide bonds. Expressed by the venom gland.

It localises to the secreted. This is Toxin CSTX-14 from Cupiennius salei (American wandering spider).